We begin with the raw amino-acid sequence, 318 residues long: Magnetosome protein MamM (318 aa).

A transmembrane domain (TMD) region spans residues M1–D210. A run of 4 helical transmembrane segments spans residues I13–L33, A39–I59, F81–H101, and L117–S137. A C-terminal domain (CTD) region spans residues H211 to N318. The Fe cation site is built by D249, H264, H285, and E289.

It belongs to the cation diffusion facilitator (CDF) transporter (TC 2.A.4) family. Forms homodimers via its C-terminal domain (CTD) in the presence of metal cations. Interacts with MamB via their CTD.

It is found in the magnetosome membrane. The protein localises to the cell inner membrane. Its function is as follows. Probably plays a role in biomineralization. Required for stable accumulation of MamB. Probably binds and transports iron. May nucleate iron crystal formation. This is Magnetosome protein MamM (mamM) from Paramagnetospirillum magneticum (strain ATCC 700264 / AMB-1) (Magnetospirillum magneticum).